A 114-amino-acid chain; its full sequence is Ribonuclease P protein component (114 aa).

This sequence belongs to the RnpA family. As to quaternary structure, consists of a catalytic RNA component (M1 or rnpB) and a protein subunit.

It catalyses the reaction Endonucleolytic cleavage of RNA, removing 5'-extranucleotides from tRNA precursor.. Functionally, RNaseP catalyzes the removal of the 5'-leader sequence from pre-tRNA to produce the mature 5'-terminus. It can also cleave other RNA substrates such as 4.5S RNA. The protein component plays an auxiliary but essential role in vivo by binding to the 5'-leader sequence and broadening the substrate specificity of the ribozyme. In Borrelia hermsii (strain HS1 / DAH), this protein is Ribonuclease P protein component.